A 240-amino-acid polypeptide reads, in one-letter code: Ubiquinone biosynthesis O-methyltransferase (240 aa).

S-adenosyl-L-methionine contacts are provided by R44, G64, D85, and M129.

Belongs to the methyltransferase superfamily. UbiG/COQ3 family.

The enzyme catalyses a 3-demethylubiquinol + S-adenosyl-L-methionine = a ubiquinol + S-adenosyl-L-homocysteine + H(+). The catalysed reaction is a 3-(all-trans-polyprenyl)benzene-1,2-diol + S-adenosyl-L-methionine = a 2-methoxy-6-(all-trans-polyprenyl)phenol + S-adenosyl-L-homocysteine + H(+). Its pathway is cofactor biosynthesis; ubiquinone biosynthesis. O-methyltransferase that catalyzes the 2 O-methylation steps in the ubiquinone biosynthetic pathway. This chain is Ubiquinone biosynthesis O-methyltransferase, found in Escherichia coli (strain UTI89 / UPEC).